The following is a 575-amino-acid chain: Dual specificity protein phosphatase YVH1 (575 aa).

The tract at residues 185–213 is disordered; sequence KHNNNNNNNNNNNNNNNNNNNNNNCCTFK. Positions 187 to 208 are enriched in low complexity; sequence NNNNNNNNNNNNNNNNNNNNNN. The Tyrosine-protein phosphatase domain occupies 283–435; the sequence is NYKINQEEDT…LLLYEKMNYT (153 aa). Residue Cys379 is the Phosphocysteine intermediate of the active site. The Zn(2+) site is built by Cys476 and Cys530.

It belongs to the protein-tyrosine phosphatase family. Non-receptor class dual specificity subfamily. As to quaternary structure, interacts with PES. The cofactor is Zn(2+).

It localises to the cytoplasm. It is found in the nucleus. It carries out the reaction O-phospho-L-tyrosyl-[protein] + H2O = L-tyrosyl-[protein] + phosphate. It catalyses the reaction O-phospho-L-seryl-[protein] + H2O = L-seryl-[protein] + phosphate. In terms of biological role, dual specificity protein phosphatase which dephosphorylates both phosphotyrosine and phosphoserine residues. In Plasmodium falciparum (isolate 3D7), this protein is Dual specificity protein phosphatase YVH1.